The chain runs to 377 residues: Transcription factor Sox-17-alpha-B (377 aa).

Disordered stretches follow at residues 1–20 and 31–57; these read MSSP…KCSV and QWSE…AEGR. Residues 42–57 show a composition bias toward basic and acidic residues; sequence GKLKSDANSRSKAEGR. Residues 58 to 126 constitute a DNA-binding region (HMG box); that stretch reads IRRPMNAFMV…QHMQDHPNYK (69 aa). Residues 262 to 376 enclose the Sox C-terminal domain; that stretch reads GSPVEGMMAC…TAVYYCNYPS (115 aa). The tract at residues 282–321 is disordered; that stretch reads MYLPGSTRHHQHPQAGQPSPPPEAQQLGRADQTQQADMMA. The 9aaTAD motif lies at 325–333; sequence TEFEQYLSY. The required for transcriptional activity and interaction with ctnnb1 stretch occupies residues 326-331; sequence EFEQYL.

As to quaternary structure, interacts (via C-terminus) with ctnnb1/beta-catenin (via Armadillo repeats); this interaction is required for inhibition of wnt-signaling. Enriched in the embryonic endoderm. Expressed in the embryonic gut, with strong expression in the posterior gut during tailbud stages. Expressed at a low level in the adult kidney and spleen.

It is found in the nucleus. Functionally, transcription activator. Binds to the DNA sequence 5'-AACAAT-3'. All of the sox17 proteins are required for embryonic endoderm development and gastrulation movements, and show some redundancy in function. In addition, the sox17 proteins have distinct but overlapping roles in later gut development. Acts downstream of vegt-signaling in endoderm differentiation to induce a range of endodermal genes both directly (including endodermin and dhh/chh) and indirectly. Also represses wnt-responsive genes to inhibit wnt/beta-catenin signaling. The sequence is that of Transcription factor Sox-17-alpha-B (sox17a-b) from Xenopus laevis (African clawed frog).